A 778-amino-acid chain; its full sequence is MPVQVLKIIKGKPETQLPSHLQREDLKHLQTGLDHTNKYFQGIVILSYPLTKLGDGTDFFKIVLQDDTCSRINSINVLMYGKMAEDCAKLIRNGDTFIVAGFKVAESPTAREDGRHACHLQVSEESGSAIFICTQPSITPFSEATSPSVAPKYVYTPLNCLKDGTVVNLYGIVKFFKPPYISKGTDYCSVVTLVDQSNVKLTCTLFNGNLDSLPKIYKNGDIVRFHRVKIREYNGQMQGITSAGFASLTFDGTVGAPVVPRASSKVYTFVDEEQKTVEELRIWAASNLSVSGPEAKLSDVKPMMFFDLTCQLVGKAKVDGSSFLLKVWDGTKCPYPTWKVPVEAKELEGDRVLLHHLRNLTVDVLVYDNHVQLAKSLKTGSFLRIYSIHTKQASAKNEDMSSHIEFHLHGGTCYGRGIGILPENNPDVEELKSFLECVELTDSQNMESVSSLELGDTFDSYTDLESPLQRCQQLSATVLTDHQDMSNTVLKTVLNSSAPQQYRIRAKLRSFKPQKLYQSVKLHCSKCNTLQEVPNGDAIDFILQGCAATAPNPELQSMSWYESVVWTTEEDQGRKITIHFVKHYEMLQRPENTLLMIEGGTLKEIWKLTRRFKCVIPVKSKEDDLELLDLSAPFLLQGNIKYYGCKKCSTPKSIKNLSSLAEKREPSWEPTEIAQVLGIEPLQYVFVMKFTLVDGTGVLNAYLFDYEKFFQIPASEILTNSFLQQKMEMTMNTLSPPGRKLDDLPWLECFIKSYNVADGMKHQVYYQIFDTTVAEDVV.

Belongs to the telombin family. As to quaternary structure, homodimer or homooligomer. Component of the telomerase ribonucleoprotein complex. Binds single-stranded telomeric DNA as a monomer. Found in a complex with TERF1, TINF2 and TNKS1. Interacts with TNKS1.

Its subcellular location is the nucleus. It localises to the chromosome. The protein localises to the telomere. Component of the telomerase ribonucleoprotein (RNP) complex that is essential for the replication of chromosome termini. Is a component of the double-stranded telomeric DNA-binding TRF1 complex that is involved in the regulation of telomere length by cis-inhibition of telomerase. Also acts as a single-stranded telomeric DNA-binding protein and thus may act as a downstream effector of the TRF1 complex and may transduce information about telomere maintenance and/or length to the telomere terminus. Binds to at least two telomeric single-stranded 5'-TTAGGG-3' repeats (G-strand). Its activity is TERT dependent but it does not increase TERT activity. This chain is Protection of telomeres protein 1 (POT1), found in Gallus gallus (Chicken).